A 471-amino-acid polypeptide reads, in one-letter code: Alkaline phosphatase (471 aa).

The N-terminal stretch at 1–21 is a signal peptide; that stretch reads MKQSTIALALLPLLFTPVTKA. Position 73 (D73) interacts with Mg(2+). D73 provides a ligand contact to Zn(2+). S124 acts as the Phosphoserine intermediate in catalysis. Residues D175 and T177 each contribute to the Mg(2+) site. 2 disulfides stabilise this stretch: C190–C200 and C308–C358. E344 serves as a coordination point for Mg(2+). D349, H353, D391, H392, and H434 together coordinate Zn(2+).

Belongs to the alkaline phosphatase family. Isozymes 1 and 3 are a dimer of identical chains, isozyme 2 is a dimer of heterogeneous chains, one of each of the subunits from isozymes 1 and 3. Mg(2+) is required as a cofactor. The cofactor is Zn(2+).

It is found in the periplasm. The enzyme catalyses a phosphate monoester + H2O = an alcohol + phosphate. The polypeptide is Alkaline phosphatase (phoA) (Escherichia coli (strain K12)).